We begin with the raw amino-acid sequence, 652 residues long: DNA ligase (652 aa).

NAD(+)-binding positions include 30-34 (DEVYD), 79-80 (SL), and Glu108. The active-site N6-AMP-lysine intermediate is Lys110. NAD(+)-binding residues include Arg131, Glu165, Lys280, and Lys304. 4 residues coordinate Zn(2+): Cys398, Cys401, Cys414, and Cys419. In terms of domain architecture, BRCT spans 574–652 (AKENPFKGKS…DEMRSKIEQA (79 aa)).

The protein belongs to the NAD-dependent DNA ligase family. LigA subfamily. Mg(2+) is required as a cofactor. Mn(2+) serves as cofactor.

The catalysed reaction is NAD(+) + (deoxyribonucleotide)n-3'-hydroxyl + 5'-phospho-(deoxyribonucleotide)m = (deoxyribonucleotide)n+m + AMP + beta-nicotinamide D-nucleotide.. Its function is as follows. DNA ligase that catalyzes the formation of phosphodiester linkages between 5'-phosphoryl and 3'-hydroxyl groups in double-stranded DNA using NAD as a coenzyme and as the energy source for the reaction. It is essential for DNA replication and repair of damaged DNA. The protein is DNA ligase of Sulfurimonas denitrificans (strain ATCC 33889 / DSM 1251) (Thiomicrospira denitrificans (strain ATCC 33889 / DSM 1251)).